The sequence spans 364 residues: MSANSSRVGQLLLQGSACIRWKQDVEGAVYHLANCLLLLGFMGGSGVYGCFYLFGFLSAGYLCCVLWGWFSACGLDIVLWSFLLAVVCLLQLAHLVYRLREDTLPEEFDLLYKTLCLPLQVPLQTYKEIVHCCEEQVLTLATEQTYAVEGETPINRLSLLLSGRVRVSQDGQFLHYIFPYQFMDSPEWESLQPSEEGVFQVTLTAETSCSYISWPRKSLHLLLTKERYISCLFSALLGYDISEKLYTLNDKLFAKFGLRFDIRLPSLYHVLGPTAADAGPESEKGDEEVCEPAVSPPQATPTSLQQTPPCSTPPATTNFPAPPTRARLSRPDSGILASRIPLQSYSQVISRGQAPLAPTHTPEL.

Residue asparagine 4 is glycosylated (N-linked (GlcNAc...) asparagine). A run of 2 helical transmembrane segments spans residues 37–57 (LLLGFMGGSGVYGCFYLFGFL) and 77–97 (IVLWSFLLAVVCLLQLAHLVY). The interval 276–333 (ADAGPESEKGDEEVCEPAVSPPQATPTSLQQTPPCSTPPATTNFPAPPTRARLSRPDS) is disordered. Positions 300-309 (TPTSLQQTPP) are enriched in polar residues. Threonine 361 is modified (phosphothreonine).

It belongs to the popeye family. Expressed predominantly in the heart and in the skeletal muscle.

It localises to the membrane. The protein localises to the cell membrane. Its subcellular location is the sarcolemma. Functionally, important for the maintenance of cardiac function. Plays a regulatory function in heart rate dynamics mediated, at least in part, through cAMP-binding and, probably, by increasing cell surface expression of the potassium channel KCNK2 and enhancing current density. The protein is Popeye domain-containing protein 2 (POPDC2) of Homo sapiens (Human).